A 496-amino-acid chain; its full sequence is MSAVNVAPELINADNTITYDAIVIGAGVIGPCVATGLARKGKKVLIVERDWAMPDRIVGELMQPGGVRALRSLGMIQSINNIEAYPVTGYTVFFNGEQVDIPYPYKADIPKVEKLKDLVKDGNDKVLEDSTIHIKDYEDDERERGVAFVHGRFLNNLRNITAQEPNVTRVQGNCIEILKDEKNEVVGAKVDIDGRGKVEFKAHLTFICDGIFSRFRKELHPDHVPTVGSSFVGMSLFNAKNPAPMHGHVILGSDHMPILVYQISPEETRILCAYNSPKVPADIKSWMIKDVQPFIPKSLRPSFDEAVSQGKFRAMPNSYLPARQNDVTGMCVIGDALNMRHPLTGGGMTVGLHDVVLLIKKIGDLDFSDREKVLDELLDYHFERKSYDSVINVLSVALYSLFAADSDNLKALQKGCFKYFQRGGDCVNKPVEFLSGVLPKPLQLTRVFFAVAFYTIYLNMEERGFLGLPMALLEGIMILITAIRVFTPFLFGELIG.

Over 1 to 16 (MSAVNVAPELINADNT) the chain is Cytoplasmic. The helical transmembrane segment at 17-37 (ITYDAIVIGAGVIGPCVATGL) threads the bilayer. FAD contacts are provided by residues 28–29 (VI), 48–49 (ER), R56, and R158. Residues 38 to 474 (ARKGKKVLIV…FLGLPMALLE (437 aa)) are Lumenal-facing. Glycyl lysine isopeptide (Lys-Gly) (interchain with G-Cter in ubiquitin) cross-links involve residues K284, K289, and K311. FAD contacts are provided by D335 and M348. The helical transmembrane segment at 475–495 (GIMILITAIRVFTPFLFGELI) threads the bilayer. Residue G496 is a topological domain, cytoplasmic.

It belongs to the squalene monooxygenase family. Interacts with ERG28. FAD is required as a cofactor.

It localises to the microsome membrane. It is found in the endoplasmic reticulum membrane. Its subcellular location is the lipid droplet. It carries out the reaction squalene + reduced [NADPH--hemoprotein reductase] + O2 = (S)-2,3-epoxysqualene + oxidized [NADPH--hemoprotein reductase] + H2O + H(+). It participates in terpene metabolism; lanosterol biosynthesis; lanosterol from farnesyl diphosphate: step 2/3. Its activity is regulated as follows. Inhibited by the allylamine antimycotic drugs. Its function is as follows. Squalene epoxidase; part of the third module of ergosterol biosynthesis pathway that includes the late steps of the pathway. ERG1 catalyzes the epoxidation of squalene into 2,3-epoxysqualene. The third module or late pathway involves the ergosterol synthesis itself through consecutive reactions that mainly occur in the endoplasmic reticulum (ER) membrane. Firstly, the squalene synthase ERG9 catalyzes the condensation of 2 farnesyl pyrophosphate moieties to form squalene, which is the precursor of all steroids. Squalene synthase is crucial for balancing the incorporation of farnesyl diphosphate (FPP) into sterol and nonsterol isoprene synthesis. Secondly, the squalene epoxidase ERG1 catalyzes the stereospecific oxidation of squalene to (S)-2,3-epoxysqualene, which is considered to be a rate-limiting enzyme in steroid biosynthesis. Then, the lanosterol synthase ERG7 catalyzes the cyclization of (S)-2,3 oxidosqualene to lanosterol, a reaction that forms the sterol core. In the next steps, lanosterol is transformed to zymosterol through a complex process involving various demethylation, reduction and desaturation reactions. The lanosterol 14-alpha-demethylase ERG11 (also known as CYP51) catalyzes C14-demethylation of lanosterol to produce 4,4'-dimethyl cholesta-8,14,24-triene-3-beta-ol, which is critical for ergosterol biosynthesis. The C-14 reductase ERG24 reduces the C14=C15 double bond of 4,4-dimethyl-cholesta-8,14,24-trienol to produce 4,4-dimethyl-cholesta-8,24-dienol. 4,4-dimethyl-cholesta-8,24-dienol is substrate of the C-4 demethylation complex ERG25-ERG26-ERG27 in which ERG25 catalyzes the three-step monooxygenation required for the demethylation of 4,4-dimethyl and 4alpha-methylsterols, ERG26 catalyzes the oxidative decarboxylation that results in a reduction of the 3-beta-hydroxy group at the C-3 carbon to an oxo group, and ERG27 is responsible for the reduction of the keto group on the C-3. ERG28 has a role as a scaffold to help anchor ERG25, ERG26 and ERG27 to the endoplasmic reticulum and ERG29 regulates the activity of the iron-containing C4-methylsterol oxidase ERG25. Then, the sterol 24-C-methyltransferase ERG6 catalyzes the methyl transfer from S-adenosyl-methionine to the C-24 of zymosterol to form fecosterol. The C-8 sterol isomerase ERG2 catalyzes the reaction which results in unsaturation at C-7 in the B ring of sterols and thus converts fecosterol to episterol. The sterol-C5-desaturase ERG3 then catalyzes the introduction of a C-5 double bond in the B ring to produce 5-dehydroepisterol. The C-22 sterol desaturase ERG5 further converts 5-dehydroepisterol into ergosta-5,7,22,24(28)-tetraen-3beta-ol by forming the C-22(23) double bond in the sterol side chain. Finally, ergosta-5,7,22,24(28)-tetraen-3beta-ol is substrate of the C-24(28) sterol reductase ERG4 to produce ergosterol. The polypeptide is Squalene epoxidase ERG1 (Saccharomyces cerevisiae (strain ATCC 204508 / S288c) (Baker's yeast)).